The following is a 363-amino-acid chain: Spermidine/putrescine import ATP-binding protein PotA (363 aa).

In terms of domain architecture, ABC transporter spans 6-236 (LEIRNVTRRF…PRSRFVADFI (231 aa)). Residue 38–45 (GPSGCGKT) participates in ATP binding.

It belongs to the ABC transporter superfamily. Spermidine/putrescine importer (TC 3.A.1.11.1) family. As to quaternary structure, the complex is composed of two ATP-binding proteins (PotA), two transmembrane proteins (PotB and PotC) and a solute-binding protein (PotD).

The protein resides in the cell inner membrane. It carries out the reaction ATP + H2O + polyamine-[polyamine-binding protein]Side 1 = ADP + phosphate + polyamineSide 2 + [polyamine-binding protein]Side 1.. Its function is as follows. Part of the ABC transporter complex PotABCD involved in spermidine/putrescine import. Responsible for energy coupling to the transport system. This chain is Spermidine/putrescine import ATP-binding protein PotA, found in Pseudomonas aeruginosa (strain UCBPP-PA14).